We begin with the raw amino-acid sequence, 1368 residues long: DNA-directed RNA polymerase subunit beta (1368 aa).

This sequence belongs to the RNA polymerase beta chain family. As to quaternary structure, the RNAP catalytic core consists of 2 alpha, 1 beta, 1 beta' and 1 omega subunit. When a sigma factor is associated with the core the holoenzyme is formed, which can initiate transcription.

The catalysed reaction is RNA(n) + a ribonucleoside 5'-triphosphate = RNA(n+1) + diphosphate. Its function is as follows. DNA-dependent RNA polymerase catalyzes the transcription of DNA into RNA using the four ribonucleoside triphosphates as substrates. The sequence is that of DNA-directed RNA polymerase subunit beta from Cupriavidus metallidurans (strain ATCC 43123 / DSM 2839 / NBRC 102507 / CH34) (Ralstonia metallidurans).